We begin with the raw amino-acid sequence, 150 residues long: Lipoprotein signal peptidase (150 aa).

A run of 3 helical transmembrane segments spans residues 8–28 (FYAL…LAHA), 58–78 (GFSW…GWFL), and 81–101 (TTGS…NVFD). Active-site residues include aspartate 116 and aspartate 132. A helical transmembrane segment spans residues 126-146 (VVFNIADLFILAGVFGTFLFL).

Belongs to the peptidase A8 family.

The protein localises to the cell membrane. The catalysed reaction is Release of signal peptides from bacterial membrane prolipoproteins. Hydrolyzes -Xaa-Yaa-Zaa-|-(S,diacylglyceryl)Cys-, in which Xaa is hydrophobic (preferably Leu), and Yaa (Ala or Ser) and Zaa (Gly or Ala) have small, neutral side chains.. The protein operates within protein modification; lipoprotein biosynthesis (signal peptide cleavage). Its function is as follows. This protein specifically catalyzes the removal of signal peptides from prolipoproteins. This is Lipoprotein signal peptidase from Tropheryma whipplei (strain Twist) (Whipple's bacillus).